We begin with the raw amino-acid sequence, 245 residues long: tRNA (guanine-N(1)-)-methyltransferase (245 aa).

Residues G111 and M131 to L136 each bind S-adenosyl-L-methionine.

The protein belongs to the RNA methyltransferase TrmD family. As to quaternary structure, homodimer.

It localises to the cytoplasm. It catalyses the reaction guanosine(37) in tRNA + S-adenosyl-L-methionine = N(1)-methylguanosine(37) in tRNA + S-adenosyl-L-homocysteine + H(+). Its function is as follows. Specifically methylates guanosine-37 in various tRNAs. The chain is tRNA (guanine-N(1)-)-methyltransferase from Staphylococcus epidermidis (strain ATCC 35984 / DSM 28319 / BCRC 17069 / CCUG 31568 / BM 3577 / RP62A).